A 318-amino-acid chain; its full sequence is MKAVIAVFITLMLTAVVAFQPAASFSAPKCAGKMSMAIEDAPKKAAAAALAALTTLSVISPSFAITKEELRSLDYLQVKGTGLANRCPEVKGTDSIKVKGAGQEIVDLCIEPKTFQVLEETRNKKGELSKEFINTKLMTRQTYTLDGISGDLNVVDGKIQFTELDGIDYAATTVQKPGGERVPFLFTVKELVAKASAGGNTIAPGFQMGGKFVVPSYRTGLFLDPKGRGATTGYDMAVALPGIQSGVEGDEELFRENNKVFDVLSGQIEFEVNRVNLEEGEIGGVFVSTQGSDTDMGSKSPETVLLKGIFYGRIADKE.

Residues 1 to 18 (MKAVIAVFITLMLTAVVA) form the signal peptide. Residues 45–65 (AAAAALAALTTLSVISPSFAI) traverse the membrane as a helical segment.

It belongs to the PsbO family.

It is found in the plastid. The protein resides in the chloroplast thylakoid membrane. In terms of biological role, stabilizes the manganese cluster which is the primary site of water splitting. The sequence is that of Oxygen-evolving enhancer protein 1, chloroplastic from Chattonella marina var. antiqua (Red tide flagellate).